A 277-amino-acid polypeptide reads, in one-letter code: Large ribosomal subunit protein uL2 (277 aa).

3 disordered regions span residues 1-20, 27-55, and 207-277; these read MGIRTFRPYTPGTRQASVSD, TQPEKSLTTYKHSSQGRNNRGVVTSRHRG, and KAGR…RNQS. A compositionally biased stretch (polar residues) spans 27 to 48; that stretch reads TQPEKSLTTYKHSSQGRNNRGV. 2 stretches are compositionally biased toward basic residues: residues 207-220 and 259-277; these read KAGRSRHRGKRPHV and TRNRKKASSKLIIRRRNQS.

The protein belongs to the universal ribosomal protein uL2 family. In terms of assembly, part of the 50S ribosomal subunit. Forms a bridge to the 30S subunit in the 70S ribosome.

Its function is as follows. One of the primary rRNA binding proteins. Required for association of the 30S and 50S subunits to form the 70S ribosome, for tRNA binding and peptide bond formation. It has been suggested to have peptidyltransferase activity; this is somewhat controversial. Makes several contacts with the 16S rRNA in the 70S ribosome. This Gloeothece citriformis (strain PCC 7424) (Cyanothece sp. (strain PCC 7424)) protein is Large ribosomal subunit protein uL2.